Here is a 193-residue protein sequence, read N- to C-terminus: Ancillary SecYEG translocon subunit (193 aa).

Over M1–N8 the chain is Cytoplasmic. Residues I9–F29 form a helical membrane-spanning segment. Over S30–N193 the chain is Periplasmic.

This sequence belongs to the YfgM family. As to quaternary structure, interacts with the SecYEG translocon. Forms a complex with PpiD.

It localises to the cell inner membrane. May mediate protein transfer from the SecYEG translocon to the periplasmic chaperone network via its periplasmic C-terminal region. This Buchnera aphidicola subsp. Acyrthosiphon pisum (strain APS) (Acyrthosiphon pisum symbiotic bacterium) protein is Ancillary SecYEG translocon subunit.